The sequence spans 431 residues: Phosphate regulon sensor protein PhoR (431 aa).

The Cytoplasmic segment spans residues 1–13 (MLERLSWKRLALE). Residues 14-34 (LFLACIPALILGAFVGHLPWF) form a helical membrane-spanning segment. Over 35 to 38 (LLAA) the chain is Periplasmic. The helical transmembrane segment at 39–59 (VTGLLIWHFWNLMRLSWWLWV) threads the bilayer. The Cytoplasmic portion of the chain corresponds to 60–431 (DRSMTPPPGR…PERLIARNDA (372 aa)). Residues 98–166 (KRFRSGAESL…KQRDFSKPLN (69 aa)) enclose the PAS domain. In terms of domain architecture, Histidine kinase spans 210–425 (NVSHELRTPL…RFSFLLPERL (216 aa)). Histidine 213 is modified (phosphohistidine; by autocatalysis).

Its subcellular location is the cell inner membrane. The enzyme catalyses ATP + protein L-histidine = ADP + protein N-phospho-L-histidine.. Member of the two-component regulatory system PhoR/PhoB involved in the phosphate regulon genes expression. PhoR may function as a membrane-associated protein kinase that phosphorylates PhoB in response to environmental signals. The protein is Phosphate regulon sensor protein PhoR (phoR) of Klebsiella pneumoniae.